The following is a 211-amino-acid chain: Redox-sensing transcriptional repressor Rex (211 aa).

The segment at residues 16–55 (LYYRYLLILNEEGKDKVSSTELSEAVQVDSASIRRDFSYF) is a DNA-binding region (H-T-H motif). 90-95 (GVGNLG) contacts NAD(+).

It belongs to the transcriptional regulatory Rex family. In terms of assembly, homodimer.

The protein localises to the cytoplasm. In terms of biological role, modulates transcription in response to changes in cellular NADH/NAD(+) redox state. This Lactobacillus acidophilus (strain ATCC 700396 / NCK56 / N2 / NCFM) protein is Redox-sensing transcriptional repressor Rex.